We begin with the raw amino-acid sequence, 316 residues long: Protoheme IX farnesyltransferase (316 aa).

9 consecutive transmembrane segments (helical) span residues 32–52, 53–73, 93–113, 116–136, 152–172, 180–200, 226–246, 248–268, and 289–309; these read VMSL…GQIN, PVLG…SGAL, IPAG…LSCF, AILG…TIFF, NIVI…ACVT, TVLF…LALF, IVAY…LGFA, FAYG…SIAV, and IFYL…AMLV.

Belongs to the UbiA prenyltransferase family. Protoheme IX farnesyltransferase subfamily.

The protein localises to the cell inner membrane. The catalysed reaction is heme b + (2E,6E)-farnesyl diphosphate + H2O = Fe(II)-heme o + diphosphate. It functions in the pathway porphyrin-containing compound metabolism; heme O biosynthesis; heme O from protoheme: step 1/1. Converts heme B (protoheme IX) to heme O by substitution of the vinyl group on carbon 2 of heme B porphyrin ring with a hydroxyethyl farnesyl side group. This Rhizobium etli (strain CIAT 652) protein is Protoheme IX farnesyltransferase.